The sequence spans 264 residues: 3-methyl-2-oxobutanoate hydroxymethyltransferase (264 aa).

2 residues coordinate Mg(2+): Asp-45 and Asp-84. 3-methyl-2-oxobutanoate contacts are provided by residues 45–46, Asp-84, and Lys-112; that span reads DS. Glu-114 is a binding site for Mg(2+). The Proton acceptor role is filled by Glu-181.

This sequence belongs to the PanB family. Homodecamer; pentamer of dimers. Mg(2+) is required as a cofactor.

Its subcellular location is the cytoplasm. The catalysed reaction is 3-methyl-2-oxobutanoate + (6R)-5,10-methylene-5,6,7,8-tetrahydrofolate + H2O = 2-dehydropantoate + (6S)-5,6,7,8-tetrahydrofolate. Its pathway is cofactor biosynthesis; (R)-pantothenate biosynthesis; (R)-pantoate from 3-methyl-2-oxobutanoate: step 1/2. Its function is as follows. Catalyzes the reversible reaction in which hydroxymethyl group from 5,10-methylenetetrahydrofolate is transferred onto alpha-ketoisovalerate to form ketopantoate. In Edwardsiella ictaluri (strain 93-146), this protein is 3-methyl-2-oxobutanoate hydroxymethyltransferase.